The chain runs to 148 residues: MKPRNRRIALIVAGLSALGIATALVLNAFQSNLVFFFTPSQVSAGEAPLERTFRVGGMVERGSLKRQRGELAVQFVITDTVKAIPVTYSGILPDLFSEGKGVVVQGRLDSAGLFRAEEVLAKHDENYMPPEAQHALDEVQKKPASRKP.

The Cytoplasmic segment spans residues methionine 1–arginine 7. The helical; Signal-anchor for type II membrane protein transmembrane segment at isoleucine 8–alanine 28 threads the bilayer. Residues phenylalanine 29–proline 148 are Periplasmic-facing. Residues histidine 123 and tyrosine 127 each contribute to the heme site. The interval methionine 128–proline 148 is disordered.

This sequence belongs to the CcmE/CycJ family.

It localises to the cell inner membrane. In terms of biological role, heme chaperone required for the biogenesis of c-type cytochromes. Transiently binds heme delivered by CcmC and transfers the heme to apo-cytochromes in a process facilitated by CcmF and CcmH. The sequence is that of Cytochrome c-type biogenesis protein CcmE from Pseudomonas aeruginosa.